The chain runs to 270 residues: Phosphatidylglycerol--prolipoprotein diacylglyceryl transferase (270 aa).

Transmembrane regions (helical) follow at residues 14-34 (VIFEIGPIGLRWYGLMYLLGF), 60-80 (LLFNGFMGVFLGGRIGYVLFY), 95-115 (VWEGGMSFHGGLIGVILAMLI), 128-148 (ADFVAPLIPFGLGMGRIGNFI), 176-196 (SQLYEAVLEGIVLFFILNWYI), 202-222 (IGATAGLFLLGYGIFRFIVEF), and 238-258 (ISMGQILSTPMILIGAVIMLV). Arginine 143 is an a 1,2-diacyl-sn-glycero-3-phospho-(1'-sn-glycerol) binding site.

The protein belongs to the Lgt family.

The protein localises to the cell inner membrane. It catalyses the reaction L-cysteinyl-[prolipoprotein] + a 1,2-diacyl-sn-glycero-3-phospho-(1'-sn-glycerol) = an S-1,2-diacyl-sn-glyceryl-L-cysteinyl-[prolipoprotein] + sn-glycerol 1-phosphate + H(+). It participates in protein modification; lipoprotein biosynthesis (diacylglyceryl transfer). Catalyzes the transfer of the diacylglyceryl group from phosphatidylglycerol to the sulfhydryl group of the N-terminal cysteine of a prolipoprotein, the first step in the formation of mature lipoproteins. The sequence is that of Phosphatidylglycerol--prolipoprotein diacylglyceryl transferase from Pasteurella multocida (strain Pm70).